The chain runs to 228 residues: Ribonuclease 3 (228 aa).

The 123-residue stretch at 5-127 folds into the RNase III domain; the sequence is LTALQERLKH…LIGAVYLDAG (123 aa). Glu-40 serves as a coordination point for Mg(2+). Residue Asp-44 is part of the active site. 2 residues coordinate Mg(2+): Asp-113 and Glu-116. Residue Glu-116 is part of the active site. The DRBM domain occupies 154-224; that stretch reads DPKTELQEWL…AAAMLIRLKA (71 aa).

This sequence belongs to the ribonuclease III family. In terms of assembly, homodimer. Mg(2+) is required as a cofactor.

The protein resides in the cytoplasm. The enzyme catalyses Endonucleolytic cleavage to 5'-phosphomonoester.. Functionally, digests double-stranded RNA. Involved in the processing of primary rRNA transcript to yield the immediate precursors to the large and small rRNAs (23S and 16S). Processes some mRNAs, and tRNAs when they are encoded in the rRNA operon. Processes pre-crRNA and tracrRNA of type II CRISPR loci if present in the organism. In Variovorax paradoxus (strain S110), this protein is Ribonuclease 3.